A 420-amino-acid chain; its full sequence is MVLSRGETKKNSVRLTAKQEKKPQSTFQTLKQSLKLSNNKKLKQDSTQHSNDTNKSVKAKKNGTSSKKTGTQRKRISTQRFSLFTYGNVQVMNSFVPIHNDIPNSSCIRRNSQVSANNVTESSGVFFNDTQSQDSQNTIKLKPTSLMAKGPIEIYQICTGFDKLKENIAPFQKSSKASSHDGHVVNYLSIGRHGDIVHPVLPKLQITRLNGAGFKYFISFYNPERYWEIEFLPLISQSQSELENSVKAFENVISKICQFSHINEGATIGNNESLSDKFKLPPTSDIEPPNTEIINNDDDNDDDDDNYDDDDLNYLLDEEYEQGCTDNSFSVISNTCSNLNASFLYPSDPTDAVSISINEAFKNAIRRTAPVLNIPIAAPSIHSKQQNKRYSSYPFIDSPPYLQDRHRRFQRRSISGLGDL.

Basic and acidic residues predominate over residues 1–10; that stretch reads MVLSRGETKK. Disordered regions lie at residues 1–75 and 273–309; these read MVLS…QRKR and SLSD…NYDD. Low complexity predominate over residues 30 to 39; it reads LKQSLKLSNN. The span at 45 to 56 shows a compositional bias: polar residues; sequence DSTQHSNDTNKS. The residue at position 273 (Ser273) is a Phosphoserine. The segment covering 295-309 has biased composition (acidic residues); it reads NNDDDNDDDDDNYDD.

Belongs to the INP1 family. Interacts with PEX25, PEX30 and VPS1.

It localises to the peroxisome membrane. Required for peroxisome inheritance. The sequence is that of Inheritance of peroxisomes protein 1 (INP1) from Saccharomyces cerevisiae (strain ATCC 204508 / S288c) (Baker's yeast).